Reading from the N-terminus, the 365-residue chain is Glutamate 5-kinase 1 (365 aa).

Lysine 9 provides a ligand contact to ATP. Residues serine 49, aspartate 136, and asparagine 148 each contribute to the substrate site. Residues 168 to 169 (TD) and 210 to 216 (TGGMKSK) each bind ATP. The PUA domain maps to 276-353 (SGEIIIDAGA…DELDFEKTFE (78 aa)).

The protein belongs to the glutamate 5-kinase family.

The protein localises to the cytoplasm. It catalyses the reaction L-glutamate + ATP = L-glutamyl 5-phosphate + ADP. It participates in amino-acid biosynthesis; L-proline biosynthesis; L-glutamate 5-semialdehyde from L-glutamate: step 1/2. Its function is as follows. Catalyzes the transfer of a phosphate group to glutamate to form L-glutamate 5-phosphate. The polypeptide is Glutamate 5-kinase 1 (Bacillus subtilis (strain 168)).